The sequence spans 481 residues: Glutamate--tRNA ligase 2 (481 aa).

Positions 17–27 match the 'HIGH' region motif; that stretch reads PSPTGFLHIGG. A compositionally biased stretch (basic and acidic residues) spans 118–139; it reads AEQRAKKQPQRYDGRWRDRDPS. Residues 118–143 form a disordered region; it reads AEQRAKKQPQRYDGRWRDRDPSEAPA. Residues 246-250 carry the 'KMSKS' region motif; the sequence is KLSKR. K249 contacts ATP.

It belongs to the class-I aminoacyl-tRNA synthetase family. Glutamate--tRNA ligase type 1 subfamily. As to quaternary structure, monomer.

The protein localises to the cytoplasm. The catalysed reaction is tRNA(Glu) + L-glutamate + ATP = L-glutamyl-tRNA(Glu) + AMP + diphosphate. Functionally, catalyzes the attachment of glutamate to tRNA(Glu) in a two-step reaction: glutamate is first activated by ATP to form Glu-AMP and then transferred to the acceptor end of tRNA(Glu). The sequence is that of Glutamate--tRNA ligase 2 from Zymomonas mobilis subsp. mobilis (strain ATCC 31821 / ZM4 / CP4).